Reading from the N-terminus, the 115-residue chain is Large ribosomal subunit protein bL19 (115 aa).

Belongs to the bacterial ribosomal protein bL19 family.

Functionally, this protein is located at the 30S-50S ribosomal subunit interface and may play a role in the structure and function of the aminoacyl-tRNA binding site. The sequence is that of Large ribosomal subunit protein bL19 from Shouchella clausii (strain KSM-K16) (Alkalihalobacillus clausii).